The chain runs to 192 residues: Ras-like GTP-binding protein Rho1 (192 aa).

12–19 (GDGACGKT) provides a ligand contact to GTP. The short motif at 34–42 (YVPTVFENY) is the Effector region element. Residues 59–63 (DTAGQ) and 117–120 (NKKD) each bind GTP. A Cysteine methyl ester modification is found at cysteine 189. Cysteine 189 is lipidated: S-geranylgeranyl cysteine. The propeptide at 190-192 (LLL) is removed in mature form.

This sequence belongs to the small GTPase superfamily. Rho family. In terms of assembly, interacts with capu. Interacts (via REM repeats) with Pkn (via N-terminus). Interacts (via N-terminus) with wash (via N-terminus). May interact with dia/diaphanous (via CBD/FH3 domain). In terms of tissue distribution, expressed in hemocytes (at protein level).

It localises to the cell membrane. The protein localises to the cytoplasm. It is found in the cytoskeleton. The protein resides in the apical cell membrane. Its subcellular location is the lateral cell membrane. Functionally, has a role in regulating actin cytoskeletal organization: required during early development for proper execution of morphogenetic movements of individual cells and groups of cells important for the formation of the embryonic body plan. Plays a role in regulating dorsal closure during embryogenesis. During axis elongation, required for Rho-kinase Rok planar polarity and adherens junction localization as well as for generating a planar polarized distribution of the actin-binding protein Shrm. During embryogenesis, acts upstream of wash to regulate the developmental migration of tail hemocytes anteriorly along the ventral midline. May have a role in eye development. Involved in targeted recruitment of dia/diaphanous to apical membranes of polarized epithelial cells. This is Ras-like GTP-binding protein Rho1 from Drosophila melanogaster (Fruit fly).